We begin with the raw amino-acid sequence, 391 residues long: Salivary protein TRIO (391 aa).

The first 24 residues, 1 to 24 (MCRGLSAVLILLVSLSAQLHVVVG), serve as a signal peptide directing secretion. Asn-323 carries an N-linked (GlcNAc...) asparagine glycan.

Female salivary gland (at protein level). Female saliva (at protein level). Not detected in female midgut, head and carcass (at protein level). Not detected in male tissues (at protein level).

The protein resides in the secreted. Its function is as follows. Required for efficient probing on a mammalian host. Alters the local inflammatory response in the host skin following a mosquito bite by suppressing TNF-alpha/TNF expression. (Microbial infection) Contributes to optimal transmission of Plasmodium berghei sporozoites to mice. Functionally, (Microbial infection) Contributes to optimal transmission of Plasmodium falciparum sporozoites to mammalian host. The sequence is that of Salivary protein TRIO from Anopheles gambiae (African malaria mosquito).